The chain runs to 150 residues: D-aminoacyl-tRNA deacylase (150 aa).

A Gly-cisPro motif, important for rejection of L-amino acids motif is present at residues 138–139 (GP).

It belongs to the DTD family. Homodimer.

The protein resides in the cytoplasm. It carries out the reaction glycyl-tRNA(Ala) + H2O = tRNA(Ala) + glycine + H(+). The catalysed reaction is a D-aminoacyl-tRNA + H2O = a tRNA + a D-alpha-amino acid + H(+). Its function is as follows. An aminoacyl-tRNA editing enzyme that deacylates mischarged D-aminoacyl-tRNAs. Also deacylates mischarged glycyl-tRNA(Ala), protecting cells against glycine mischarging by AlaRS. Acts via tRNA-based rather than protein-based catalysis; rejects L-amino acids rather than detecting D-amino acids in the active site. By recycling D-aminoacyl-tRNA to D-amino acids and free tRNA molecules, this enzyme counteracts the toxicity associated with the formation of D-aminoacyl-tRNA entities in vivo and helps enforce protein L-homochirality. This chain is D-aminoacyl-tRNA deacylase, found in Porphyromonas gingivalis (strain ATCC 33277 / DSM 20709 / CIP 103683 / JCM 12257 / NCTC 11834 / 2561).